Here is a 79-residue protein sequence, read N- to C-terminus: Sec-independent protein translocase protein TatA (79 aa).

Residues 1–21 (MGGWSSPSHWLIILLIVVLLF) form a helical membrane-spanning segment. Residues 52-61 (KNTQKIEENK) show a composition bias toward basic and acidic residues. The disordered stretch occupies residues 52–79 (KNTQKIEENKNTTNNTSADASIDKTKKA).

The protein belongs to the TatA/E family. The Tat system comprises two distinct complexes: a TatABC complex, containing multiple copies of TatA, TatB and TatC subunits, and a separate TatA complex, containing only TatA subunits. Substrates initially bind to the TatABC complex, which probably triggers association of the separate TatA complex to form the active translocon.

The protein localises to the cell inner membrane. Its function is as follows. Part of the twin-arginine translocation (Tat) system that transports large folded proteins containing a characteristic twin-arginine motif in their signal peptide across membranes. TatA could form the protein-conducting channel of the Tat system. The sequence is that of Sec-independent protein translocase protein TatA from Campylobacter jejuni subsp. jejuni serotype O:6 (strain 81116 / NCTC 11828).